A 74-amino-acid chain; its full sequence is Conotoxin AbVIL (74 aa).

Residues 1–17 (VLIIAVLFLTACQLTTA) form the signal peptide. The disordered stretch occupies residues 17 to 41 (AETSSRGEQKHRAPRSTDKNSRMTK). Residues 18 to 40 (ETSSRGEQKHRAPRSTDKNSRMT) constitute a propeptide that is removed on maturation. Positions 21–37 (SRGEQKHRAPRSTDKNS) are enriched in basic and acidic residues. Cystine bridges form between Cys-43-Cys-57, Cys-50-Cys-61, and Cys-56-Cys-68.

Belongs to the conotoxin O1 superfamily. Expressed by the venom duct.

Its subcellular location is the secreted. This chain is Conotoxin AbVIL, found in Conus abbreviatus (Abbreviated cone).